The sequence spans 329 residues: Malate dehydrogenase (329 aa).

Position 12–18 (12–18) interacts with NAD(+); that stretch reads GAAGQIG. Positions 93 and 99 each coordinate substrate. NAD(+) is bound by residues asparagine 106, glutamine 113, and 130–132; that span reads TGN. Residues asparagine 132 and arginine 163 each contribute to the substrate site. Catalysis depends on histidine 188, which acts as the Proton acceptor.

It belongs to the LDH/MDH superfamily. MDH type 2 family.

The enzyme catalyses (S)-malate + NAD(+) = oxaloacetate + NADH + H(+). Functionally, catalyzes the reversible oxidation of malate to oxaloacetate. The protein is Malate dehydrogenase of Mycobacterium bovis (strain ATCC BAA-935 / AF2122/97).